Here is a 1025-residue protein sequence, read N- to C-terminus: Protein mono-ADP-ribosyltransferase PARP10 (1025 aa).

Phosphothreonine is present on Thr101. Glu106 is modified (ADP-ribosyl glutamic acid). Lys140 is modified (N6-(ADP-ribosyl)lysine). The segment at 318 to 346 (GIMTTGSGQEPGQSGTSLRTGPMGSLGQA) is disordered. Polar residues predominate over residues 321–336 (TTGSGQEPGQSGTSLR). A phosphoserine mark is found at Ser378, Ser423, and Ser431. 2 disordered regions span residues 569 to 589 (VLPG…DQED) and 617 to 644 (LEEE…APST). Acidic residues predominate over residues 617–639 (LEEEGPQEQPEEEVTPGHEEEEP). Short sequence motifs (ubiquitin-interacting) lie at residues 650–667 (LEEE…LEPQ) and 673–690 (QEEA…LLEQ). Ser663 is modified (phosphoserine). Residues 700–907 (DGGTDGKAQL…CAHGFNRSFC (208 aa)) are myc binding. A PARP catalytic domain is found at 806 to 1025 (PTLAGQTLKG…SGLPGRSPDT (220 aa)). The PIP-box motif lies at 831–838 (QEVVRAFY). The residue at position 882 (Glu882) is an ADP-ribosyl glutamic acid. Residue Lys916 is modified to N6-(ADP-ribosyl)lysine. The residue at position 916 (Lys916) is an N6-acetyllysine. The tract at residues 1006–1025 (HVPRASPDDPSGLPGRSPDT) is disordered. Ser1011 carries the phosphoserine modification.

It belongs to the ARTD/PARP family. Interacts with MYC. Interacts with PARP14. Interacts (via-PIP box and ubiquitin-interacting motifs) with PCNA. Stimulated through its phosphorylation by CDK2. Acquires CDK-dependent phosphorylation through late-G1 to S phase, and from prometaphase to cytokinesis in the nucleolar organizing regions. Phosphorylation is suppressed in growth-arrested cells. Post-translationally, auto-mono-ADP-ribosylated on glutamate and lysine residues. In terms of tissue distribution, highly expressed in spleen and thymus. Intermediate levels in liver, kidney, pancreas, prostate, testis, ovary, intestine, and leukocytes. Low expression in heart, brain, placenta, lung, skeletal muscle, and colon.

It localises to the nucleus. It is found in the nucleolus. The protein resides in the cytoplasm. The catalysed reaction is L-lysyl-[protein] + NAD(+) = N(6)-(ADP-D-ribosyl)-L-lysyl-[protein] + nicotinamide + H(+). The enzyme catalyses L-aspartyl-[protein] + NAD(+) = 4-O-(ADP-D-ribosyl)-L-aspartyl-[protein] + nicotinamide. It carries out the reaction L-glutamyl-[protein] + NAD(+) = 5-O-(ADP-D-ribosyl)-L-glutamyl-[protein] + nicotinamide. Its function is as follows. ADP-ribosyltransferase that mediates mono-ADP-ribosylation of glutamate and aspartate residues on target proteins. In contrast to PARP1 and PARP2, it is not able to mediate poly-ADP-ribosylation. Catalyzes mono-ADP-ribosylation of GSK3B, leading to negatively regulate GSK3B kinase activity. Involved in translesion DNA synthesis in response to DNA damage via its interaction with PCNA. This is Protein mono-ADP-ribosyltransferase PARP10 from Homo sapiens (Human).